The primary structure comprises 301 residues: Probable alpha-L-glutamate ligase 1 (301 aa).

The ATP-grasp domain maps to leucine 104–glutamate 287. ATP is bound by residues lysine 141, glutamate 178–tyrosine 179, aspartate 187, and arginine 211–asparagine 213. Mg(2+) is bound by residues aspartate 248, glutamate 260, and asparagine 262. Positions 248, 260, and 262 each coordinate Mn(2+).

The protein belongs to the RimK family. Requires Mg(2+) as cofactor. Mn(2+) serves as cofactor.

In Shewanella frigidimarina (strain NCIMB 400), this protein is Probable alpha-L-glutamate ligase 1.